The following is a 144-amino-acid chain: Cell division protein SepF (144 aa).

Over residues 21–38 (TDLQGTKTTDEVSPTSRP) the composition is skewed to polar residues. Residues 21 to 40 (TDLQGTKTTDEVSPTSRPDN) form a disordered region.

The protein belongs to the SepF family. As to quaternary structure, homodimer. Interacts with FtsZ.

The protein resides in the cytoplasm. Cell division protein that is part of the divisome complex and is recruited early to the Z-ring. Probably stimulates Z-ring formation, perhaps through the cross-linking of FtsZ protofilaments. Its function overlaps with FtsA. The polypeptide is Cell division protein SepF (Latilactobacillus sakei subsp. sakei (strain 23K) (Lactobacillus sakei subsp. sakei)).